A 176-amino-acid polypeptide reads, in one-letter code: uncharacterized protein (176 aa).

This is an uncharacterized protein from Caenorhabditis elegans.